A 470-amino-acid chain; its full sequence is Mitogen-activated protein kinase 15 (470 aa).

The Protein kinase domain occupies 13 to 306 (FDLQKRLGKG…VEQCLVHPYV (294 aa)). ATP is bound by residues 19–27 (LGKGAYGIV) and lysine 42. Residue aspartate 137 is the Proton acceptor of the active site. The residue at position 178 (threonine 178) is a Phosphothreonine. Positions 178–180 (TEY) match the TXY motif. Tyrosine 180 bears the Phosphotyrosine mark. The disordered stretch occupies residues 362–445 (PYGEDKSRAP…PSSIKQRRRS (84 aa)). The span at 394 to 406 (MDKNNSSSHDSSS) shows a compositional bias: low complexity. Over residues 409-426 (LRERAASAESRTSKDSNG) the composition is skewed to basic and acidic residues.

The protein belongs to the protein kinase superfamily. CMGC Ser/Thr protein kinase family. MAP kinase subfamily. It depends on Mg(2+) as a cofactor. In terms of processing, dually phosphorylated on Thr-178 and Tyr-180, which activates the enzyme. As to expression, expressed in the URX neuron and in many other head sensory neurons. Isoform a: Expressed in head and tail ciliated sensory neurons, and in mid-body neurons. Isoform c: Expressed in head and tail ciliated sensory neurons, and in mid-body neurons.

It localises to the cell projection. It is found in the cilium. Its subcellular location is the cilium membrane. The protein resides in the cytoplasm. The protein localises to the cytoskeleton. It localises to the cilium axoneme. It is found in the cilium basal body. Its subcellular location is the cell junction. The protein resides in the perikaryon. The protein localises to the dendrite. The catalysed reaction is L-seryl-[protein] + ATP = O-phospho-L-seryl-[protein] + ADP + H(+). It carries out the reaction L-threonyl-[protein] + ATP = O-phospho-L-threonyl-[protein] + ADP + H(+). With respect to regulation, activated by threonine and tyrosine phosphorylation. Functionally, atypical MAPK protein. Regulates primary cilium formation in sensory neurons and the localization of ciliary proteins involved in cilium structure, transport, and signaling. Acts in dopamine (DA) neurons to support synaptic membrane dat-1 availability via activation of rho-1 thereby sustaining normal levels of DA clearance. Plays a role in male mating behavior, probably in part through regulating the localization of the polycystin pkd-2. Functions postembryonically in the URX sensory neurons to constrain URX dendrite growth throughout lifetime, probably by restricting expansion of the subcellular sensory compartment at the dendrite ending. The polypeptide is Mitogen-activated protein kinase 15 (Caenorhabditis elegans).